A 120-amino-acid polypeptide reads, in one-letter code: Large ribosomal subunit protein bL17 (120 aa).

The protein belongs to the bacterial ribosomal protein bL17 family. As to quaternary structure, part of the 50S ribosomal subunit. Contacts protein L32.

In Mesomycoplasma hyopneumoniae (strain 232) (Mycoplasma hyopneumoniae), this protein is Large ribosomal subunit protein bL17.